The primary structure comprises 274 residues: Diaminopimelate epimerase (274 aa).

Substrate-binding residues include Asn11, Gln44, and Asn64. The active-site Proton donor is the Cys73. Substrate contacts are provided by residues 74–75 (GN), Asn157, Asn190, and 208–209 (ER). Cys217 functions as the Proton acceptor in the catalytic mechanism. 218–219 (GS) contacts substrate.

This sequence belongs to the diaminopimelate epimerase family. In terms of assembly, homodimer.

Its subcellular location is the cytoplasm. The enzyme catalyses (2S,6S)-2,6-diaminopimelate = meso-2,6-diaminopimelate. It participates in amino-acid biosynthesis; L-lysine biosynthesis via DAP pathway; DL-2,6-diaminopimelate from LL-2,6-diaminopimelate: step 1/1. Catalyzes the stereoinversion of LL-2,6-diaminopimelate (L,L-DAP) to meso-diaminopimelate (meso-DAP), a precursor of L-lysine and an essential component of the bacterial peptidoglycan. This is Diaminopimelate epimerase from Yersinia enterocolitica serotype O:8 / biotype 1B (strain NCTC 13174 / 8081).